A 107-amino-acid chain; its full sequence is uncharacterized protein (107 aa).

This is an uncharacterized protein from Acidianus bottle-shaped virus (isolate Italy/Pozzuoli) (ABV).